The primary structure comprises 542 residues: Homeobox protein ceh-18 (542 aa).

The span at 243–252 shows a compositional bias: polar residues; that stretch reads NTPTQPTASL. The interval 243–264 is disordered; it reads NTPTQPTASLTPKKAENRPPVV. A POU-specific domain is found at 290–364; the sequence is DDRIDMNELE…LLKEWLADVE (75 aa). Residues 421-480 constitute a DNA-binding region (homeobox); sequence RRRKRTNLDMNQRNALDTFFALNPRPDHDKMTDIANSLELDRDVVRVWFCNRRQKMRRVD. Residues 514–542 are disordered; sequence LASCQASNDDSDGTSGSPDAPSNDGCSDL. Over residues 517-530 the composition is skewed to polar residues; that stretch reads CQASNDDSDGTSGS.

This sequence belongs to the POU transcription factor family. In terms of assembly, interacts with akir-1. As to expression, expressed in the gonadal sheath cells that signal the oocyte, but not in the oocyte.

The protein localises to the nucleus. In terms of biological role, directs gonadal sheath cell differentiation and function. Also directs gonad migration and plays a role in specifying the differentiated phenotypes of epidermal cells during postembryonic development. Plays a role in oogenesis, regulating a sheath cell signal that causes oocytes to maintain diakinesis arrest during meiosis. Negatively regulates oocyte maturation, ovulation and MAPK activation in oocytes when sperm are not available for fertilization. May be recruited by akir-1 to the promoter regions of antimicrobial peptide genes to control gene expression in response to fungal infection. This chain is Homeobox protein ceh-18, found in Caenorhabditis elegans.